A 325-amino-acid chain; its full sequence is Tetraacyldisaccharide 4'-kinase (325 aa).

53–60 contributes to the ATP binding site; the sequence is SVGGNGKT.

The protein belongs to the LpxK family.

It catalyses the reaction a lipid A disaccharide + ATP = a lipid IVA + ADP + H(+). Its pathway is glycolipid biosynthesis; lipid IV(A) biosynthesis; lipid IV(A) from (3R)-3-hydroxytetradecanoyl-[acyl-carrier-protein] and UDP-N-acetyl-alpha-D-glucosamine: step 6/6. Its function is as follows. Transfers the gamma-phosphate of ATP to the 4'-position of a tetraacyldisaccharide 1-phosphate intermediate (termed DS-1-P) to form tetraacyldisaccharide 1,4'-bis-phosphate (lipid IVA). This is Tetraacyldisaccharide 4'-kinase from Pasteurella multocida (strain Pm70).